Consider the following 466-residue polypeptide: RuvB-like helicase 2 (466 aa).

74-81 (GPPSTGKT) contributes to the ATP binding site.

Belongs to the RuvB family. As to quaternary structure, may form heterododecamers with RVB1. Component of the SWR1 chromatin remodeling complex, the INO80 chromatin remodeling complex, and of the R2TP complex.

It localises to the nucleus. It carries out the reaction ATP + H2O = ADP + phosphate + H(+). Functionally, DNA helicase which participates in several chromatin remodeling complexes, including the SWR1 and the INO80 complexes. The SWR1 complex mediates the ATP-dependent exchange of histone H2A for the H2A variant HZT1 leading to transcriptional regulation of selected genes by chromatin remodeling. The INO80 complex remodels chromatin by shifting nucleosomes and is involved in DNA repair. Also involved in pre-rRNA processing. This Yarrowia lipolytica (strain CLIB 122 / E 150) (Yeast) protein is RuvB-like helicase 2 (RVB2).